We begin with the raw amino-acid sequence, 612 residues long: Dihydroxy-acid dehydratase (612 aa).

D81 contacts Mg(2+). [2Fe-2S] cluster is bound at residue C122. Positions 123 and 124 each coordinate Mg(2+). Residue K124 is modified to N6-carboxylysine. C193 provides a ligand contact to [2Fe-2S] cluster. E489 contacts Mg(2+). S515 (proton acceptor) is an active-site residue.

It belongs to the IlvD/Edd family. As to quaternary structure, homodimer. Requires [2Fe-2S] cluster as cofactor. Mg(2+) serves as cofactor.

It carries out the reaction (2R)-2,3-dihydroxy-3-methylbutanoate = 3-methyl-2-oxobutanoate + H2O. The enzyme catalyses (2R,3R)-2,3-dihydroxy-3-methylpentanoate = (S)-3-methyl-2-oxopentanoate + H2O. Its pathway is amino-acid biosynthesis; L-isoleucine biosynthesis; L-isoleucine from 2-oxobutanoate: step 3/4. The protein operates within amino-acid biosynthesis; L-valine biosynthesis; L-valine from pyruvate: step 3/4. In terms of biological role, functions in the biosynthesis of branched-chain amino acids. Catalyzes the dehydration of (2R,3R)-2,3-dihydroxy-3-methylpentanoate (2,3-dihydroxy-3-methylvalerate) into 2-oxo-3-methylpentanoate (2-oxo-3-methylvalerate) and of (2R)-2,3-dihydroxy-3-methylbutanoate (2,3-dihydroxyisovalerate) into 2-oxo-3-methylbutanoate (2-oxoisovalerate), the penultimate precursor to L-isoleucine and L-valine, respectively. This chain is Dihydroxy-acid dehydratase, found in Xanthomonas euvesicatoria pv. vesicatoria (strain 85-10) (Xanthomonas campestris pv. vesicatoria).